A 410-amino-acid polypeptide reads, in one-letter code: Beta-arrestin-2 (410 aa).

Tyr-48 carries the post-translational modification Phosphotyrosine. Residues Pro-176 and Pro-181 each carry the hydroxyproline; by PHD2 modification. Residues 241–410 (ADICLFSTAQ…KDDDCDDQFC (170 aa)) are interaction with TRAF6. Residue Ser-361 is modified to Phosphoserine. The tract at residues 378–410 (DTNYATDDDIVFEDFARLRLKGMKDDDCDDQFC) is interaction with AP2B1. At Thr-383 the chain carries Phosphothreonine; by CaMK2. A [DE]-X(1,2)-F-X-X-[FL]-X-X-X-R motif motif is present at residues 386–396 (DIVFEDFARLR).

This sequence belongs to the arrestin family. In terms of assembly, homooligomer; the self-association is mediated by InsP6-binding. Heterooligomer with ARRB1; the association is mediated by InsP6-binding. Interacts with ADRB2 and CHRM2. Interacts with PDE4A. Interacts with PDE4D. Interacts with MAPK10, MAPK1 and MAPK3. Interacts with DRD2. Interacts with FSHR. Interacts with CLTC. Interacts with HTR2C. Interacts with CCR5. Interacts with CXCR4. Interacts with SRC. Interacts with DUSP16; the interaction is interrupted by stimulation of AGTR1 and activation of MAPK10. Interacts with CHUK; the interaction is enhanced stimulation of ADRB2. Interacts with RELA. Interacts with MDM2; the interaction is enhanced by activation of GPCRs. Interacts with SLC9A5. Interacts with TRAF6. Interacts with IGF1R. Interacts with ENG. Interacts with KIR2DL1, KIR2DL3 and KIR2DL4. Interacts with LDLR. Interacts with AP2B1. Interacts with C5AR1. Interacts with RAF1. Interacts with MAP2K1. Interacts with MAPK1. Interacts with MAPK10; the interaction enhances MAPK10 activation by MAP3K5. Interacts with MAP2K4; the interaction is enhanced by presence of MAP3K5 and MAPK10. Interacts with MAP3K5. Interacts with AKT1. Interacts with IKBKB and MAP3K14. Interacts with SMO (activated). Interacts with GSK3A and GSK3B. Associates with protein phosphatase 2A (PP2A). Interacts with CXCR4; the interaction is dependent on C-terminal phosphorylation of CXCR4 and allows activation of MAPK1 and MAPK3. Interacts with GPR143. Interacts with HCK and CXCR1 (phosphorylated). Interacts with ACKR3 and ACKR4. Interacts with ARRDC1; the interaction is direct. Interacts with GPR61, GPR62 and GPR135. Interacts (via NACHT and LRR domains) with NLRP3; this interaction is direct and inducible by omega-3 polyunsaturated fatty acids (PUFAs). Interacts with FFAR4 (via C-terminus); this interaction is stimulated by long-chain fatty acids (LCFAs). Interacts with GPR35. Interacts with GPR84. Interacts with TIGIT; this interaction inhibits the NF-kappa-B pathway. Interacts with TGFBR3. In terms of processing, phosphorylated at Thr-383 in the cytoplasm; probably dephosphorylated at the plasma membrane. The phosphorylation does not regulate internalization and recycling of ADRB2, interaction with clathrin or AP2B1. Post-translationally, the ubiquitination status appears to regulate the formation and trafficking of beta-arrestin-GPCR complexes and signaling. Ubiquitination appears to occur GPCR-specific. Ubiquitinated by MDM2; the ubiquitination is required for rapid internalization of ADRB2. Deubiquitinated by USP33; the deubiquitination leads to a dissociation of the beta-arrestin-GPCR complex. Stimulation of a class A GPCR, such as ADRB2, induces transient ubiquitination and subsequently promotes association with USP33. Stimulation of a class B GPCR promotes a sustained ubiquitination. Deubiquitinated by USP20; allowing USP20 to deubiquitinate TRAF6 leading to inhibition of NF-kappa-B signaling. Hydroxylation by PHD2 modulates the rate of internalization by slowing down recruitment to the plasma membrane and inhibiting subsequent co-internalization with class A receptors. In terms of tissue distribution, predominantly localized in neuronal tissues and in the spleen.

The protein resides in the cytoplasm. It localises to the nucleus. Its subcellular location is the cell membrane. It is found in the membrane. The protein localises to the clathrin-coated pit. The protein resides in the cytoplasmic vesicle. Its function is as follows. Functions in regulating agonist-mediated G-protein coupled receptor (GPCR) signaling by mediating both receptor desensitization and resensitization processes. During homologous desensitization, beta-arrestins bind to the GPRK-phosphorylated receptor and sterically preclude its coupling to the cognate G-protein; the binding appears to require additional receptor determinants exposed only in the active receptor conformation. The beta-arrestins target many receptors for internalization by acting as endocytic adapters (CLASPs, clathrin-associated sorting proteins) and recruiting the GPRCs to the adapter protein 2 complex 2 (AP-2) in clathrin-coated pits (CCPs). However, the extent of beta-arrestin involvement appears to vary significantly depending on the receptor, agonist and cell type. Internalized arrestin-receptor complexes traffic to intracellular endosomes, where they remain uncoupled from G-proteins. Two different modes of arrestin-mediated internalization occur. Class A receptors, like ADRB2, OPRM1, ENDRA, D1AR and ADRA1B dissociate from beta-arrestin at or near the plasma membrane and undergo rapid recycling. Class B receptors, like AVPR2, AGTR1, NTSR1, TRHR and TACR1 internalize as a complex with arrestin and traffic with it to endosomal vesicles, presumably as desensitized receptors, for extended periods of time. Receptor resensitization then requires that receptor-bound arrestin is removed so that the receptor can be dephosphorylated and returned to the plasma membrane. Mediates endocytosis of CCR7 following ligation of CCL19 but not CCL21. Involved in internalization of P2RY1, P2RY4, P2RY6 and P2RY11 and ATP-stimulated internalization of P2RY2. Involved in phosphorylation-dependent internalization of OPRD1 and subsequent recycling or degradation. Involved in ubiquitination of IGF1R. Beta-arrestins function as multivalent adapter proteins that can switch the GPCR from a G-protein signaling mode that transmits short-lived signals from the plasma membrane via small molecule second messengers and ion channels to a beta-arrestin signaling mode that transmits a distinct set of signals that are initiated as the receptor internalizes and transits the intracellular compartment. Acts as a signaling scaffold for MAPK pathways such as MAPK1/3 (ERK1/2) and MAPK10 (JNK3). ERK1/2 and JNK3 activated by the beta-arrestin scaffold are largely excluded from the nucleus and confined to cytoplasmic locations such as endocytic vesicles, also called beta-arrestin signalosomes. Acts as a signaling scaffold for the AKT1 pathway. GPCRs for which the beta-arrestin-mediated signaling relies on both ARRB1 and ARRB2 (codependent regulation) include ADRB2, F2RL1 and PTH1R. For some GPCRs the beta-arrestin-mediated signaling relies on either ARRB1 or ARRB2 and is inhibited by the other respective beta-arrestin form (reciprocal regulation). Increases ERK1/2 signaling in AGTR1- and AVPR2-mediated activation (reciprocal regulation). Involved in CCR7-mediated ERK1/2 signaling involving ligand CCL19. Is involved in type-1A angiotensin II receptor/AGTR1-mediated ERK activity. Is involved in type-1A angiotensin II receptor/AGTR1-mediated MAPK10 activity. Is involved in dopamine-stimulated AKT1 activity in the striatum by disrupting the association of AKT1 with its negative regulator PP2A. Involved in AGTR1-mediated chemotaxis. Appears to function as signaling scaffold involved in regulation of MIP-1-beta-stimulated CCR5-dependent chemotaxis. Involved in attenuation of NF-kappa-B-dependent transcription in response to GPCR or cytokine stimulation by interacting with and stabilizing CHUK. Suppresses UV-induced NF-kappa-B-dependent activation by interacting with CHUK. The function is promoted by stimulation of ADRB2 and dephosphorylation of ARRB2. Involved in IL8-mediated granule release in neutrophils. Involved in p53/TP53-mediated apoptosis by regulating MDM2 and reducing the MDM2-mediated degradation of p53/TP53. May serve as nuclear messenger for GPCRs. Upon stimulation of OR1D2, may be involved in regulation of gene expression during the early processes of fertilization. Also involved in regulation of receptors other than GPCRs. Involved in endocytosis of TGFBR2 and TGFBR3 and down-regulates TGF-beta signaling such as NF-kappa-B activation. Involved in endocytosis of low-density lipoprotein receptor/LDLR. Involved in endocytosis of smoothened homolog/Smo, which also requires GRK2. Involved in endocytosis of SLC9A5. Involved in endocytosis of ENG and subsequent TGF-beta-mediated ERK activation and migration of epithelial cells. Involved in Toll-like receptor and IL-1 receptor signaling through the interaction with TRAF6 which prevents TRAF6 autoubiquitination and oligomerization required for activation of NF-kappa-B and JUN. Involved in insulin resistance by acting as insulin-induced signaling scaffold for SRC, AKT1 and INSR. Involved in regulation of inhibitory signaling of natural killer cells by recruiting PTPN6 and PTPN11 to KIR2DL1. Involved in the internalization of the atypical chemokine receptor ACKR3. Acts as an adapter protein coupling FFAR4 receptor to specific downstream signaling pathways, as well as mediating receptor endocytosis. During the activation step of NLRP3 inflammasome, directly associates with NLRP3 leading to inhibition of pro-inflammatory cytokine release and inhibition of inflammation. This Rattus norvegicus (Rat) protein is Beta-arrestin-2 (Arrb2).